A 916-amino-acid chain; its full sequence is MGPDRRIVAAKPRVHEVASELGVDSKIALAKLKEMGEFVKGPSSSIEPPVARKLRAALEAEGHLPGAGGDKTAAQASPAPRPPRPATADGSGAPKPQAPMSVAERQAAAEKAASEKAAAEKVAASEAADAKPAAGAPADTAKPSSPPRPSGVSAPRPGNNPFASNQGMGQRPSAPRPGNNPFSSSQGMGQRPSPSNIPRPAPPRPGSPRIGAPRPGGGQRQGGGGRPGFQQRPGSAGGGAGGGLQRPGGAGAGGFSGPRTGGGGGRGRGPGGGTAGAFGRGGGKSKARKSKRAKRQEFEMREAPSLGGVTVPRGDGGTAIRLRRGASISDFADKIDANPASLVTVLFHLGEMATATESLDEATFQILGEELGYKVQVVSPEDEDKELLEGFDIDLDAELEGESDEDLEIRPPVVTVMGHVDHGKTRLLDAIRSANVVEGEAGGITQHIGAYQVWTEHEGIERAITFIDTPGHEAFTAMRARGAQVTDIAILVVAADDGIMPQTIEALNHAQAANVPIVVAVNKVDKPEANPAKVRQQLTEFSLVAEEYGGDVMFVDVSARNNIGIQELLDAVLLTADAGLDLRANPNKDARGVAIEAKLDKGRGAVATVLIQSGTLRVGDAIVAGTAYGRVRAMADENGDPVLEAAPSRPVQVQGLSSVPRAGDTFIVTEEDRTARQIAEKREAAERNAQLAKARKRISLEDFTRALEEGKVEALNLIIKGDVSGAVEALEESLMKIEVDDSVSLRILHRGVGAITESDIDLATIDNAIVIGFNVRPDVKARERAAREGVDVRFYSVIYNAIDDIESSLKGMLKPEFEEVQSGVADIREVFRSSKFGNIAGVIVRSGTITRNAKARVIRDGVVIADNLAIESLRRFKDDVTEVRTDFECGIGLGKYNDIQVGDEIETIEMREKPRV.

Residues 58–317 (LEAEGHLPGA…GVTVPRGDGG (260 aa)) form a disordered region. Positions 120–142 (EKVAASEAADAKPAAGAPADTAK) are enriched in low complexity. The span at 195 to 206 (SNIPRPAPPRPG) shows a compositional bias: pro residues. Composition is skewed to gly residues over residues 214–227 (RPGGGQRQGGGGRP) and 235–282 (SAGG…GRGG). A compositionally biased stretch (basic residues) spans 283-294 (GKSKARKSKRAK). The tr-type G domain occupies 409–583 (IRPPVVTVMG…LTADAGLDLR (175 aa)). The G1 stretch occupies residues 418 to 425 (GHVDHGKT). 418-425 (GHVDHGKT) is a binding site for GTP. A G2 region spans residues 443–447 (GITQH). The tract at residues 468-471 (DTPG) is G3. GTP-binding positions include 468 to 472 (DTPGH) and 522 to 525 (NKVD). The G4 stretch occupies residues 522–525 (NKVD). The interval 558–560 (SAR) is G5.

It belongs to the TRAFAC class translation factor GTPase superfamily. Classic translation factor GTPase family. IF-2 subfamily.

The protein localises to the cytoplasm. Its function is as follows. One of the essential components for the initiation of protein synthesis. Protects formylmethionyl-tRNA from spontaneous hydrolysis and promotes its binding to the 30S ribosomal subunits. Also involved in the hydrolysis of GTP during the formation of the 70S ribosomal complex. The chain is Translation initiation factor IF-2 from Leifsonia xyli subsp. xyli (strain CTCB07).